The primary structure comprises 182 residues: Nucleoside triphosphate/diphosphate phosphatase (182 aa).

The active-site Proton donor is Arg-27. Mg(2+) contacts are provided by Asn-91, Asp-107, Asp-109, Asp-111, Asp-124, and Glu-127.

This sequence belongs to the Ntdp family. Mg(2+) serves as cofactor.

The catalysed reaction is a ribonucleoside 5'-triphosphate + H2O = a ribonucleoside 5'-diphosphate + phosphate + H(+). The enzyme catalyses a ribonucleoside 5'-diphosphate + H2O = a ribonucleoside 5'-phosphate + phosphate + H(+). Has nucleoside phosphatase activity towards nucleoside triphosphates and nucleoside diphosphates. The sequence is that of Nucleoside triphosphate/diphosphate phosphatase from Lactiplantibacillus plantarum (strain ATCC BAA-793 / NCIMB 8826 / WCFS1) (Lactobacillus plantarum).